Consider the following 188-residue polypeptide: Large ribosomal subunit protein uL5 (188 aa).

The protein belongs to the universal ribosomal protein uL5 family. In terms of assembly, part of the 50S ribosomal subunit; contacts the 5S rRNA and probably tRNA. Forms a bridge to the 30S subunit in the 70S ribosome.

In terms of biological role, this is one of the proteins that bind and probably mediate the attachment of the 5S RNA into the large ribosomal subunit, where it forms part of the central protuberance. In the 70S ribosome it contacts protein S13 of the 30S subunit (bridge B1b), connecting the 2 subunits; this bridge is implicated in subunit movement. May contact the P site tRNA; the 5S rRNA and some of its associated proteins might help stabilize positioning of ribosome-bound tRNAs. The sequence is that of Large ribosomal subunit protein uL5 from Pyrococcus horikoshii (strain ATCC 700860 / DSM 12428 / JCM 9974 / NBRC 100139 / OT-3).